The chain runs to 63 residues: Large ribosomal subunit protein bL35 (63 aa).

Residues 1–22 (MPKMKTKSGATKRFKKTATGFK) form a disordered region.

Belongs to the bacterial ribosomal protein bL35 family.

The sequence is that of Large ribosomal subunit protein bL35 from Marinobacter nauticus (strain ATCC 700491 / DSM 11845 / VT8) (Marinobacter aquaeolei).